The chain runs to 872 residues: DNA mismatch repair protein MutS (872 aa).

Position 626 to 633 (626 to 633) interacts with ATP; it reads GPNMAGKS.

Belongs to the DNA mismatch repair MutS family.

Functionally, this protein is involved in the repair of mismatches in DNA. It is possible that it carries out the mismatch recognition step. This protein has a weak ATPase activity. This is DNA mismatch repair protein MutS from Chlorobium phaeobacteroides (strain DSM 266 / SMG 266 / 2430).